Here is a 615-residue protein sequence, read N- to C-terminus: Probable transporter mch1 (615 aa).

A disordered region spans residues 1–35 (MTGSIGQAPAIDKRDFDINRRSSTPHETAAQEDEA). The segment covering 11 to 20 (IDKRDFDINR) has biased composition (basic and acidic residues). A helical membrane pass occupies residues 84-104 (FVWGVITCLGAGSITAFSLYG). A glycan (N-linked (GlcNAc...) asparagine) is linked at asparagine 112. 5 helical membrane-spanning segments follow: residues 120-140 (EVSI…GYLC), 147-167 (PLTL…AFVY), 182-202 (FWVM…MYLA), 218-238 (GIIL…QSQV), and 261-281 (FLFL…ALRI). N-linked (GlcNAc...) asparagine glycosylation occurs at asparagine 329. The next 6 helical transmembrane spans lie at 371–391 (IFLA…VTGP), 428–448 (IIAL…DLFA), 477–497 (LAFL…LASP), 512–532 (LVGL…SVVW), 538–558 (GTNW…WGVI), and 583–603 (FGFW…AWLV).

The protein belongs to the major facilitator superfamily.

It localises to the vacuole membrane. In terms of biological role, probable transporter. The sequence is that of Probable transporter mch1 (mch1) from Emericella nidulans (strain FGSC A4 / ATCC 38163 / CBS 112.46 / NRRL 194 / M139) (Aspergillus nidulans).